A 300-amino-acid polypeptide reads, in one-letter code: ATP synthase gamma chain (300 aa).

The protein belongs to the ATPase gamma chain family. As to quaternary structure, F-type ATPases have 2 components, CF(1) - the catalytic core - and CF(0) - the membrane proton channel. CF(1) has five subunits: alpha(3), beta(3), gamma(1), delta(1), epsilon(1). CF(0) has three main subunits: a, b and c.

It is found in the cell membrane. Functionally, produces ATP from ADP in the presence of a proton gradient across the membrane. The gamma chain is believed to be important in regulating ATPase activity and the flow of protons through the CF(0) complex. This is ATP synthase gamma chain from Acidothermus cellulolyticus (strain ATCC 43068 / DSM 8971 / 11B).